The following is a 562-amino-acid chain: NAD-dependent malic enzyme (562 aa).

Catalysis depends on tyrosine 101, which acts as the Proton donor. Residue arginine 154 coordinates NAD(+). Catalysis depends on lysine 172, which acts as the Proton acceptor. A divalent metal cation-binding residues include glutamate 243, aspartate 244, and aspartate 267. Residues aspartate 267 and asparagine 415 each contribute to the NAD(+) site.

This sequence belongs to the malic enzymes family. In terms of assembly, homotetramer. Requires Mg(2+) as cofactor. Mn(2+) serves as cofactor.

The catalysed reaction is (S)-malate + NAD(+) = pyruvate + CO2 + NADH. The enzyme catalyses oxaloacetate + H(+) = pyruvate + CO2. This chain is NAD-dependent malic enzyme, found in Colwellia psychrerythraea (strain 34H / ATCC BAA-681) (Vibrio psychroerythus).